A 60-amino-acid polypeptide reads, in one-letter code: LKCKKLVPLFSKTCPPGKNLCYKMFMVATPKVPVKRECIDVCPKSSLLVKYVCCNTDKCN.

Intrachain disulfides connect Cys-3–Cys-21, Cys-14–Cys-38, Cys-42–Cys-53, and Cys-54–Cys-59.

This sequence belongs to the three-finger toxin family. Short-chain subfamily. Type IA cytotoxin sub-subfamily. As to quaternary structure, monomer in solution; Homodimer and oligomer in the presence of negatively charged lipids forming a pore with a size ranging between 20 and 30 Angstroms. Expressed by the venom gland.

The protein localises to the secreted. Its subcellular location is the target cell membrane. Its function is as follows. Shows cytolytic activity on many different cells by forming pore in lipid membranes. In vivo, increases heart rate or kills the animal by cardiac arrest. In addition, it binds to heparin with high affinity, interacts with Kv channel-interacting protein 1 (KCNIP1) in a calcium-independent manner, and binds to integrin alpha-V/beta-3 (ITGAV/ITGB3) with moderate affinity. This chain is Cytotoxin SP15c, found in Naja atra (Chinese cobra).